Consider the following 72-residue polypeptide: ATP synthase subunit L (72 aa).

As to quaternary structure, F-type ATP synthases have 2 components, the catalytic core F(1) and the membrane-embedded component F(0), linked together by a central stalk and a peripheral stalk. The central stalk, also called rotor shaft, is often seen as part of F(1). The peripheral stalk is seen as part of F(0). F(0) contains the membrane channel next to the rotor. F-type ATP synthases form dimers but each monomer functions independently in ATP generation. The dimer consists of 18 different polypeptides: ATP1 (subunit alpha, part of F(1), 3 molecules per monomer), ATP2 (subunit beta, part of F(1), 3 molecules per monomer), ATP3 (subunit gamma, part of the central stalk), ATP4 (subunit b, part of the peripheral stalk), ATP5/OSCP (subunit 5/OSCP, part of the peripheral stalk), ATP6 (subunit a, part of the peripheral stalk), ATP7 (subunit d, part of the peripheral stalk), ATP8 (subunit 8, part of the peripheral stalk), OLI1 (subunit c, part of the rotor, 10 molecules per monomer), ATP14 (subunit h, part of the peripheral stalk), ATP15 (subunit epsilon, part of the central stalk), ATP16 (subunit delta, part of the central stalk), ATP17 (subunit f, part of the peripheral stalk), ATP18 (subunit i/j, part of the peripheral stalk). Dimer-specific subunits are ATP19 (subunit k, at interface between monomers), ATP20 (subunit g, at interface between monomers), TIM11 (subunit e, at interface between monomers). Also contains subunit L.

Its subcellular location is the mitochondrion inner membrane. Functionally, mitochondrial membrane ATP synthase (F(1)F(0) ATP synthase or Complex V) produces ATP from ADP in the presence of a proton gradient across the membrane which is generated by electron transport complexes of the respiratory chain. F-type ATP synthases consist of two structural domains, F(1) - containing the extramembraneous catalytic core, and F(0) - containing the membrane proton channel, linked together by a central stalk and a peripheral stalk. During catalysis, ATP synthesis in the catalytic domain of F(1) is coupled via a rotary mechanism of the central stalk subunits to proton translocation. The protein is ATP synthase subunit L of Pichia angusta (Yeast).